The chain runs to 754 residues: 5-methyltetrahydropteroyltriglutamate--homocysteine methyltransferase (754 aa).

Residues 15-18 and Lys-114 each bind 5-methyltetrahydropteroyltri-L-glutamate; that span reads RELK. Residues 430–432 and Glu-483 contribute to the L-homocysteine site; that span reads IGS. L-methionine is bound by residues 430 to 432 and Glu-483; that span reads IGS. Residues 514–515 and Trp-560 contribute to the 5-methyltetrahydropteroyltri-L-glutamate site; that span reads RC. Residue Asp-598 coordinates L-homocysteine. Residue Asp-598 participates in L-methionine binding. Residue Glu-604 participates in 5-methyltetrahydropteroyltri-L-glutamate binding. Zn(2+) is bound by residues His-641, Cys-643, and Glu-665. His-694 (proton donor) is an active-site residue. Cys-726 is a Zn(2+) binding site.

It belongs to the vitamin-B12 independent methionine synthase family. The cofactor is Zn(2+).

The catalysed reaction is 5-methyltetrahydropteroyltri-L-glutamate + L-homocysteine = tetrahydropteroyltri-L-glutamate + L-methionine. Its pathway is amino-acid biosynthesis; L-methionine biosynthesis via de novo pathway; L-methionine from L-homocysteine (MetE route): step 1/1. Catalyzes the transfer of a methyl group from 5-methyltetrahydrofolate to homocysteine resulting in methionine formation. The protein is 5-methyltetrahydropteroyltriglutamate--homocysteine methyltransferase of Campylobacter jejuni subsp. jejuni serotype O:6 (strain 81116 / NCTC 11828).